The sequence spans 325 residues: 5-dehydro-2-deoxygluconokinase (325 aa).

Belongs to the carbohydrate kinase PfkB family.

The enzyme catalyses 5-dehydro-2-deoxy-D-gluconate + ATP = 6-phospho-5-dehydro-2-deoxy-D-gluconate + ADP + H(+). Its pathway is polyol metabolism; myo-inositol degradation into acetyl-CoA; acetyl-CoA from myo-inositol: step 5/7. Its function is as follows. Catalyzes the phosphorylation of 5-dehydro-2-deoxy-D-gluconate (2-deoxy-5-keto-D-gluconate or DKG) to 6-phospho-5-dehydro-2-deoxy-D-gluconate (DKGP). This is 5-dehydro-2-deoxygluconokinase from Listeria monocytogenes serovar 1/2a (strain ATCC BAA-679 / EGD-e).